The sequence spans 179 residues: Large ribosomal subunit protein uL5 (179 aa).

Belongs to the universal ribosomal protein uL5 family. Part of the 50S ribosomal subunit; part of the 5S rRNA/L5/L18/L25 subcomplex. Contacts the 5S rRNA and the P site tRNA. Forms a bridge to the 30S subunit in the 70S ribosome.

Its function is as follows. This is one of the proteins that bind and probably mediate the attachment of the 5S RNA into the large ribosomal subunit, where it forms part of the central protuberance. In the 70S ribosome it contacts protein S13 of the 30S subunit (bridge B1b), connecting the 2 subunits; this bridge is implicated in subunit movement. Contacts the P site tRNA; the 5S rRNA and some of its associated proteins might help stabilize positioning of ribosome-bound tRNAs. This is Large ribosomal subunit protein uL5 from Geobacter sulfurreducens (strain ATCC 51573 / DSM 12127 / PCA).